Reading from the N-terminus, the 226-residue chain is Cytidylate kinase (226 aa).

11 to 19 contributes to the ATP binding site; sequence GPASAGKST.

It belongs to the cytidylate kinase family. Type 1 subfamily.

The protein resides in the cytoplasm. The catalysed reaction is CMP + ATP = CDP + ADP. It catalyses the reaction dCMP + ATP = dCDP + ADP. The chain is Cytidylate kinase from Limosilactobacillus fermentum (strain NBRC 3956 / LMG 18251) (Lactobacillus fermentum).